The sequence spans 122 residues: Large ribosomal subunit protein uL14c (122 aa).

The protein belongs to the universal ribosomal protein uL14 family. In terms of assembly, part of the 50S ribosomal subunit.

The protein resides in the plastid. It is found in the chloroplast. In terms of biological role, binds to 23S rRNA. This chain is Large ribosomal subunit protein uL14c, found in Gracilaria tenuistipitata var. liui (Red alga).